Consider the following 811-residue polypeptide: Actin filament-associated protein 1-like 2 (811 aa).

Disordered regions lie at residues 67–110 (KEAQ…PPPK) and 132–168 (EPYN…QQHQ). Residues 181–277 (DAMICAFLWR…WLKVIQDISG (97 aa)) form the PH 1 domain. The segment at 294–326 (QRQIHPKAEGTDRHSGASESGSSTDGHPETPEI) is disordered. Residues 299 to 309 (PKAEGTDRHSG) show a composition bias toward basic and acidic residues. Residues 359–453 (ALETSNYLNV…WLGLLLLESG (95 aa)) enclose the PH 2 domain. Disordered stretches follow at residues 500–532 (RGQR…GEAE) and 558–631 (LGSP…KERV). Basic and acidic residues-rich tracts occupy residues 521–532 (DEPKSEEKGEAE), 566–577 (VSGKKDNEESER), and 622–631 (RLEKSNKERV). The stretch at 642–737 (LLGKNRTEAE…KENLRKAELG (96 aa)) forms a coiled coil.

Interacts with src.

The protein resides in the cytoplasm. Its function is as follows. May play a role in a signaling cascade by enhancing the kinase activity of src. Contributes to src-regulated transcription activation. This is Actin filament-associated protein 1-like 2 (afap1l2) from Xenopus laevis (African clawed frog).